Consider the following 157-residue polypeptide: Transcriptional repressor NrdR (157 aa).

A zinc finger spans residues 3–34; the sequence is CPFCGHMESQVKDSRPSEDGAAIRRRRLCPEC. In terms of domain architecture, ATP-cone spans 49 to 139; it reads LTIVKRSGRR…VYRDFRETSD (91 aa).

Belongs to the NrdR family. Zn(2+) serves as cofactor.

Negatively regulates transcription of bacterial ribonucleotide reductase nrd genes and operons by binding to NrdR-boxes. The polypeptide is Transcriptional repressor NrdR (Caulobacter sp. (strain K31)).